We begin with the raw amino-acid sequence, 407 residues long: Aspartokinase (407 aa).

7–10 (KFGG) serves as a coordination point for ATP. 25–30 (RVIEEV) is a substrate binding site. An ATP-binding site is contributed by serine 41. Residues 47–49 (TDE), glutamate 74, 125–126 (LD), 150–153 (RGGS), and serine 153 contribute to the substrate site. Residues 173 to 174 (TD) and 179 to 184 (FTTDPR) each bind ATP. 2 consecutive ACT domains span residues 264–338 (VTVV…LAKV) and 340–407 (IVGS…AVRS). Substrate is bound by residues 289–291 (NVD), glutamine 295, 351–352 (VA), 365–366 (EI), and 372–373 (SE).

This sequence belongs to the aspartokinase family. In terms of assembly, tetramer consisting of 2 isoforms Alpha (catalytic and regulation) and of a homodimer of 2 isoforms Beta (regulation).

It carries out the reaction L-aspartate + ATP = 4-phospho-L-aspartate + ADP. It functions in the pathway amino-acid biosynthesis; L-lysine biosynthesis via DAP pathway; (S)-tetrahydrodipicolinate from L-aspartate: step 1/4. The protein operates within amino-acid biosynthesis; L-methionine biosynthesis via de novo pathway; L-homoserine from L-aspartate: step 1/3. Its pathway is amino-acid biosynthesis; L-threonine biosynthesis; L-threonine from L-aspartate: step 1/5. Lysine-sensitive. Its function is as follows. Catalyzes the phosphorylation of the beta-carboxyl group of aspartic acid with ATP to yield 4-phospho-L-aspartate, which is involved in the branched biosynthetic pathway leading to the biosynthesis of amino acids threonine, isoleucine and methionine. The polypeptide is Aspartokinase (lysC) (Geobacillus stearothermophilus (Bacillus stearothermophilus)).